A 126-amino-acid chain; its full sequence is Protein ApaG (126 aa).

The ApaG domain occupies Ser2–His126.

The sequence is that of Protein ApaG from Shewanella baltica (strain OS223).